Here is a 546-residue protein sequence, read N- to C-terminus: Hexose transporter HXT10 (546 aa).

Topologically, residues 1 to 44 (MVSSSVSILGTSAKASTSLSRKDEIKLTPETREASLDIPYKPII) are cytoplasmic. A helical membrane pass occupies residues 45–65 (AYWTVMGLCLMIAFGGFIFGW). The Extracellular segment spans residues 66-100 (DTGTISGFINQTDFKRRFGELQRDGSFQLSDVRTG). A glycan (N-linked (GlcNAc...) asparagine) is linked at N75. The helical transmembrane segment at 101–121 (LIVGIFNIGCALGGLTLGRLG) threads the bilayer. The Cytoplasmic segment spans residues 122 to 127 (DIYGRK). Residues 128-148 (IGLMCVILVYVVGIVIQIASS) traverse the membrane as a helical segment. Residues 149–158 (DKWYQYFIGR) are Extracellular-facing. The chain crosses the membrane as a helical span at residues 159–179 (IVSGMGVGGVAVLSPTLISEI). Topologically, residues 180 to 185 (SPKHLR) are cytoplasmic. The helical transmembrane segment at 186–206 (GTCVSFYQLMITLGIFLGYCT) threads the bilayer. Topologically, residues 207–220 (NYGTKKYSNSIQWR) are extracellular. The chain crosses the membrane as a helical span at residues 221–241 (VPLGLCFAWAIFMVIGMVMVP). Residues 242 to 324 (ESPRYLVEKG…IQSLQQLTGC (83 aa)) lie on the Cytoplasmic side of the membrane. Residues 325–341 (NYFFYYGTTIFNAVGMQ) form a helical membrane-spanning segment. The Extracellular segment spans residues 342 to 347 (DSFETS). Residues 348 to 365 (IVLGAVNFASTFVALYIV) form a helical membrane-spanning segment. Over 366–372 (DKFGRRK) the chain is Cytoplasmic. The chain crosses the membrane as a helical span at residues 373–393 (CLLWGSASMAICFVIFATVGV). Residues 394-415 (TRLWPQGKDQPSSQSAGNVMIV) lie on the Extracellular side of the membrane. The helical transmembrane segment at 416-436 (FTCFFIFSFAITWAPIAYVIV) threads the bilayer. Residues 437–453 (AETYPLRVKNRAMAIAV) lie on the Cytoplasmic side of the membrane. A helical transmembrane segment spans residues 454-474 (GANWMWGFLIGFFTPFITRSI). Residue G475 is a topological domain, extracellular. The helical transmembrane segment at 476–496 (FSYGYVFMGCLIFSYFYVFFF) threads the bilayer. The Cytoplasmic portion of the chain corresponds to 497 to 546 (VCETKGLTLEEVNEMYEERIKPWKSGGWIPSSRRTPQPTSSTPLVIVDSK).

This sequence belongs to the major facilitator superfamily. Sugar transporter (TC 2.A.1.1) family.

Its subcellular location is the membrane. In terms of biological role, probable glucose transporter. The polypeptide is Hexose transporter HXT10 (HXT10) (Saccharomyces cerevisiae (strain ATCC 204508 / S288c) (Baker's yeast)).